The primary structure comprises 73 residues: Translation initiation factor IF-1 3 (73 aa).

The S1-like domain occupies 1-72; it reads MAKEELVEFG…TKGRINYRHK (72 aa).

It belongs to the IF-1 family. As to quaternary structure, component of the 30S ribosomal translation pre-initiation complex which assembles on the 30S ribosome in the order IF-2 and IF-3, IF-1 and N-formylmethionyl-tRNA(fMet); mRNA recruitment can occur at any time during PIC assembly.

The protein resides in the cytoplasm. Its function is as follows. One of the essential components for the initiation of protein synthesis. Stabilizes the binding of IF-2 and IF-3 on the 30S subunit to which N-formylmethionyl-tRNA(fMet) subsequently binds. Helps modulate mRNA selection, yielding the 30S pre-initiation complex (PIC). Upon addition of the 50S ribosomal subunit IF-1, IF-2 and IF-3 are released leaving the mature 70S translation initiation complex. The chain is Translation initiation factor IF-1 3 from Cupriavidus metallidurans (strain ATCC 43123 / DSM 2839 / NBRC 102507 / CH34) (Ralstonia metallidurans).